The following is a 356-amino-acid chain: UDP-3-O-acylglucosamine N-acyltransferase (356 aa).

His242 (proton acceptor) is an active-site residue.

The protein belongs to the transferase hexapeptide repeat family. LpxD subfamily. As to quaternary structure, homotrimer.

The catalysed reaction is a UDP-3-O-[(3R)-3-hydroxyacyl]-alpha-D-glucosamine + a (3R)-hydroxyacyl-[ACP] = a UDP-2-N,3-O-bis[(3R)-3-hydroxyacyl]-alpha-D-glucosamine + holo-[ACP] + H(+). It participates in bacterial outer membrane biogenesis; LPS lipid A biosynthesis. Its function is as follows. Catalyzes the N-acylation of UDP-3-O-acylglucosamine using 3-hydroxyacyl-ACP as the acyl donor. Is involved in the biosynthesis of lipid A, a phosphorylated glycolipid that anchors the lipopolysaccharide to the outer membrane of the cell. This Acinetobacter baumannii (strain ACICU) protein is UDP-3-O-acylglucosamine N-acyltransferase.